We begin with the raw amino-acid sequence, 180 residues long: ATP synthase subunit b 2 (180 aa).

A helical transmembrane segment spans residues 33–53 (IFWLLVTLVAIYFLLTRVALP).

It belongs to the ATPase B chain family. As to quaternary structure, F-type ATPases have 2 components, F(1) - the catalytic core - and F(0) - the membrane proton channel. F(1) has five subunits: alpha(3), beta(3), gamma(1), delta(1), epsilon(1). F(0) has three main subunits: a(1), b(2) and c(10-14). The alpha and beta chains form an alternating ring which encloses part of the gamma chain. F(1) is attached to F(0) by a central stalk formed by the gamma and epsilon chains, while a peripheral stalk is formed by the delta and b chains.

It localises to the cell inner membrane. Its function is as follows. F(1)F(0) ATP synthase produces ATP from ADP in the presence of a proton or sodium gradient. F-type ATPases consist of two structural domains, F(1) containing the extramembraneous catalytic core and F(0) containing the membrane proton channel, linked together by a central stalk and a peripheral stalk. During catalysis, ATP synthesis in the catalytic domain of F(1) is coupled via a rotary mechanism of the central stalk subunits to proton translocation. Component of the F(0) channel, it forms part of the peripheral stalk, linking F(1) to F(0). The b'-subunit is a diverged and duplicated form of b found in plants and photosynthetic bacteria. The polypeptide is ATP synthase subunit b 2 (atpF2) (Cereibacter sphaeroides (strain ATCC 17029 / ATH 2.4.9) (Rhodobacter sphaeroides)).